The primary structure comprises 145 residues: Basic phospholipase A2 PC17 (145 aa).

Residues 1–21 (MYPAHLLVLLAVCVSLLGASA) form the signal peptide. Residues 22–27 (ISNQPR) constitute a propeptide that is removed on maturation. Disulfide bonds link cysteine 38/cysteine 98, cysteine 54/cysteine 144, cysteine 56/cysteine 72, cysteine 71/cysteine 125, cysteine 78/cysteine 118, cysteine 87/cysteine 111, and cysteine 105/cysteine 116. Residues tyrosine 55, glycine 57, and glycine 59 each coordinate Ca(2+). Histidine 75 is an active-site residue. Ca(2+) is bound at residue aspartate 76. Residue aspartate 119 is part of the active site.

Belongs to the phospholipase A2 family. Group I subfamily. D49 sub-subfamily. The cofactor is Ca(2+). As to expression, expressed by the venom gland.

It localises to the secreted. It carries out the reaction a 1,2-diacyl-sn-glycero-3-phosphocholine + H2O = a 1-acyl-sn-glycero-3-phosphocholine + a fatty acid + H(+). Its function is as follows. Snake venom phospholipase A2 (PLA2) that inhibits neuromuscular transmission by blocking acetylcholine release from the nerve termini. PLA2 catalyzes the calcium-dependent hydrolysis of the 2-acyl groups in 3-sn-phosphoglycerides. The sequence is that of Basic phospholipase A2 PC17 from Laticauda colubrina (Yellow-lipped sea krait).